A 467-amino-acid polypeptide reads, in one-letter code: Serine/threonine-protein kinase AFC1 (467 aa).

The Protein kinase domain occupies 115–443 (YQILSKMGEG…AREALNHPFF (329 aa)). ATP contacts are provided by residues 121 to 129 (MGEGTFGQV) and K144. The active-site Proton acceptor is the D240. The interval 447–467 (REQSIPPFNPNPHPFLYNQKN) is disordered.

Belongs to the protein kinase superfamily. CMGC Ser/Thr protein kinase family. Lammer subfamily.

The enzyme catalyses L-seryl-[protein] + ATP = O-phospho-L-seryl-[protein] + ADP + H(+). The catalysed reaction is L-threonyl-[protein] + ATP = O-phospho-L-threonyl-[protein] + ADP + H(+). It catalyses the reaction L-tyrosyl-[protein] + ATP = O-phospho-L-tyrosyl-[protein] + ADP + H(+). In terms of biological role, activator of yeast transcription factor, STE12. In Arabidopsis thaliana (Mouse-ear cress), this protein is Serine/threonine-protein kinase AFC1 (AFC1).